The primary structure comprises 59 residues: uncharacterized protein (59 aa).

The chain crosses the membrane as a helical span at residues 6 to 26; that stretch reads WWLVVFAVFVFLFDTLLMQWI.

It localises to the membrane. This is an uncharacterized protein from Escherichia coli O157:H7.